A 703-amino-acid polypeptide reads, in one-letter code: UvrABC system protein B (703 aa).

Residues 33–190 form the Helicase ATP-binding domain; sequence TRIENGENDV…RRFVAMQYKR (158 aa). Position 46–53 (46–53) interacts with ATP; the sequence is GATGTGKT. The short motif at 99-122 is the Beta-hairpin element; sequence YYDYYQPEAYIPQTDTYIEKDSNI. Positions 436–589 constitute a Helicase C-terminal domain; that stretch reads QIDDLLAEIK…QIAYNQEHGI (154 aa). The UVR domain occupies 659-694; sequence ADLIRQLSEQMHTAAEQLQFELAARLRDEIRDLKKE.

Belongs to the UvrB family. As to quaternary structure, forms a heterotetramer with UvrA during the search for lesions. Interacts with UvrC in an incision complex.

Its subcellular location is the cytoplasm. The UvrABC repair system catalyzes the recognition and processing of DNA lesions. A damage recognition complex composed of 2 UvrA and 2 UvrB subunits scans DNA for abnormalities. Upon binding of the UvrA(2)B(2) complex to a putative damaged site, the DNA wraps around one UvrB monomer. DNA wrap is dependent on ATP binding by UvrB and probably causes local melting of the DNA helix, facilitating insertion of UvrB beta-hairpin between the DNA strands. Then UvrB probes one DNA strand for the presence of a lesion. If a lesion is found the UvrA subunits dissociate and the UvrB-DNA preincision complex is formed. This complex is subsequently bound by UvrC and the second UvrB is released. If no lesion is found, the DNA wraps around the other UvrB subunit that will check the other stand for damage. The protein is UvrABC system protein B of Bifidobacterium longum subsp. infantis (strain ATCC 15697 / DSM 20088 / JCM 1222 / NCTC 11817 / S12).